A 192-amino-acid polypeptide reads, in one-letter code: MVLLAFLCAAALAALARGTIPPPEEAARMARFVLHNCDWGALATLSAQEGLRGRPFANIFSISDGAPGPGGGSGVPYLYLTDMEISVQDLEVNSNASLTVSLAQTPYCKKHRYDPQNPLCAHIIFCGSIVKVNDSEAALAKKALFTRHPEMESWPKDHNWFYAKFNITNIWVLDYFGGLKIVTPEEYYNVKP.

Residues 1–18 (MVLLAFLCAAALAALARG) form the signal peptide. N-linked (GlcNAc...) asparagine glycans are attached at residues N95, N133, and N166.

This sequence belongs to the CREG family.

It localises to the secreted. Its function is as follows. May contribute to the transcriptional control of cell growth and differentiation. This is Protein CREG1 (CREG1) from Gallus gallus (Chicken).